Consider the following 351-residue polypeptide: Cytosolic sulfotransferase 11 (351 aa).

Position 98–103 (98–103 (KGGTTW)) interacts with 3'-phosphoadenylyl sulfate. His-163 functions as the Proton acceptor in the catalytic mechanism. Residues Arg-184, Ser-192, Tyr-250, and 316-318 (RKG) contribute to the 3'-phosphoadenylyl sulfate site.

Belongs to the sulfotransferase 1 family.

The protein localises to the cytoplasm. Functionally, sulfotransferase that utilizes 3'-phospho-5'-adenylyl sulfate (PAPS) as sulfonate donor. This chain is Cytosolic sulfotransferase 11 (SOT11), found in Arabidopsis thaliana (Mouse-ear cress).